The chain runs to 245 residues: Ribosomal protein L11 methyltransferase (245 aa).

S-adenosyl-L-methionine-binding residues include Thr-101, Gly-122, Asp-144, and Asn-184.

It belongs to the methyltransferase superfamily. PrmA family.

It localises to the cytoplasm. It carries out the reaction L-lysyl-[protein] + 3 S-adenosyl-L-methionine = N(6),N(6),N(6)-trimethyl-L-lysyl-[protein] + 3 S-adenosyl-L-homocysteine + 3 H(+). Methylates ribosomal protein L11. The sequence is that of Ribosomal protein L11 methyltransferase from Aquifex aeolicus (strain VF5).